Consider the following 95-residue polypeptide: Co-chaperonin GroES (95 aa).

This sequence belongs to the GroES chaperonin family. As to quaternary structure, heptamer of 7 subunits arranged in a ring. Interacts with the chaperonin GroEL.

Its subcellular location is the cytoplasm. In terms of biological role, together with the chaperonin GroEL, plays an essential role in assisting protein folding. The GroEL-GroES system forms a nano-cage that allows encapsulation of the non-native substrate proteins and provides a physical environment optimized to promote and accelerate protein folding. GroES binds to the apical surface of the GroEL ring, thereby capping the opening of the GroEL channel. This Rickettsia canadensis (strain McKiel) protein is Co-chaperonin GroES.